Here is a 350-residue protein sequence, read N- to C-terminus: Chemokine C-C motif receptor-like 2 (350 aa).

At methionine 1–tyrosine 43 the chain is on the extracellular side. Asparagine 3 is a glycosylation site (N-linked (GlcNAc...) asparagine). A helical transmembrane segment spans residues leucine 44–valine 64. Residues lysine 65–asparagine 74 lie on the Cytoplasmic side of the membrane. A helical membrane pass occupies residues isoleucine 75–valine 95. The Extracellular segment spans residues histidine 96–lysine 110. Cysteines 109 and 187 form a disulfide. A helical membrane pass occupies residues isoleucine 111 to threonine 131. Residues valine 132–arginine 149 are Cytoplasmic-facing. A helical transmembrane segment spans residues methionine 150 to leucine 170. The Extracellular segment spans residues proline 171–histidine 204. The chain crosses the membrane as a helical span at residues phenylalanine 205 to cysteine 225. At tyrosine 226–lysine 244 the chain is on the cytoplasmic side. The chain crosses the membrane as a helical span at residues leucine 245 to phenylalanine 265. Residues leucine 266–threonine 288 are Extracellular-facing. The chain crosses the membrane as a helical span at residues leucine 289–phenylalanine 309. At aspartate 310–methionine 350 the chain is on the cytoplasmic side. The interval proline 329–methionine 350 is disordered.

It belongs to the G-protein coupled receptor 1 family.

It localises to the cell membrane. Functionally, receptor for CCL19 and chemerin/RARRES2. Does not appear to be a signaling receptor, but may have a role in modulating chemokine-triggered immune responses by capturing and internalizing CCL19 or by presenting RARRES2 ligand to CMKLR1, a functional signaling receptor. Plays a critical role for the development of Th2 responses. This Sus scrofa (Pig) protein is Chemokine C-C motif receptor-like 2 (CCRL2).